The sequence spans 600 residues: Dihydroxy-acid dehydratase (600 aa).

Aspartate 82 serves as a coordination point for Mg(2+). Cysteine 123 provides a ligand contact to [2Fe-2S] cluster. Mg(2+)-binding residues include aspartate 124 and lysine 125. At lysine 125 the chain carries N6-carboxylysine. Cysteine 192 is a [2Fe-2S] cluster binding site. Glutamate 489 serves as a coordination point for Mg(2+). Serine 515 functions as the Proton acceptor in the catalytic mechanism.

Belongs to the IlvD/Edd family. Homodimer. [2Fe-2S] cluster serves as cofactor. The cofactor is Mg(2+).

It catalyses the reaction (2R)-2,3-dihydroxy-3-methylbutanoate = 3-methyl-2-oxobutanoate + H2O. The enzyme catalyses (2R,3R)-2,3-dihydroxy-3-methylpentanoate = (S)-3-methyl-2-oxopentanoate + H2O. It participates in amino-acid biosynthesis; L-isoleucine biosynthesis; L-isoleucine from 2-oxobutanoate: step 3/4. It functions in the pathway amino-acid biosynthesis; L-valine biosynthesis; L-valine from pyruvate: step 3/4. Its function is as follows. Functions in the biosynthesis of branched-chain amino acids. Catalyzes the dehydration of (2R,3R)-2,3-dihydroxy-3-methylpentanoate (2,3-dihydroxy-3-methylvalerate) into 2-oxo-3-methylpentanoate (2-oxo-3-methylvalerate) and of (2R)-2,3-dihydroxy-3-methylbutanoate (2,3-dihydroxyisovalerate) into 2-oxo-3-methylbutanoate (2-oxoisovalerate), the penultimate precursor to L-isoleucine and L-valine, respectively. This Bacteroides fragilis (strain YCH46) protein is Dihydroxy-acid dehydratase.